A 204-amino-acid polypeptide reads, in one-letter code: Ribosomal RNA small subunit methyltransferase G (204 aa).

S-adenosyl-L-methionine is bound by residues Gly-73, Phe-78, and Arg-139.

This sequence belongs to the methyltransferase superfamily. RNA methyltransferase RsmG family.

Its subcellular location is the cytoplasm. The enzyme catalyses guanosine(527) in 16S rRNA + S-adenosyl-L-methionine = N(7)-methylguanosine(527) in 16S rRNA + S-adenosyl-L-homocysteine. Its function is as follows. Specifically methylates the N7 position of guanine in position 527 of 16S rRNA. This is Ribosomal RNA small subunit methyltransferase G from Coxiella burnetii (strain Dugway 5J108-111).